Reading from the N-terminus, the 180-residue chain is Cytochrome b6-f complex subunit 4 (180 aa).

3 helical membrane passes run 36 to 56, 95 to 115, and 131 to 151; these read LSYIFPVVILGTIACTIGLAV, LLGVLLMGSVPAGSLTVPFLE, and TVSLIGTAVALWLGIGAALPI.

The protein belongs to the cytochrome b family. PetD subfamily. As to quaternary structure, the 4 large subunits of the cytochrome b6-f complex are cytochrome b6, subunit IV (17 kDa polypeptide, petD), cytochrome f and the Rieske protein, while the 4 small subunits are petG, petL, petM and petN. The complex functions as a dimer.

It localises to the plastid. It is found in the chloroplast thylakoid membrane. Component of the cytochrome b6-f complex, which mediates electron transfer between photosystem II (PSII) and photosystem I (PSI), cyclic electron flow around PSI, and state transitions. This is Cytochrome b6-f complex subunit 4 from Pinus thunbergii (Japanese black pine).